The sequence spans 75 residues: UPF0352 protein VIBHAR_03027 (75 aa).

The protein belongs to the UPF0352 family.

The polypeptide is UPF0352 protein VIBHAR_03027 (Vibrio campbellii (strain ATCC BAA-1116)).